Reading from the N-terminus, the 231-residue chain is Large ribosomal subunit protein uL1 (231 aa).

It belongs to the universal ribosomal protein uL1 family. In terms of assembly, part of the 50S ribosomal subunit.

Binds directly to 23S rRNA. The L1 stalk is quite mobile in the ribosome, and is involved in E site tRNA release. Its function is as follows. Protein L1 is also a translational repressor protein, it controls the translation of the L11 operon by binding to its mRNA. This Staphylococcus haemolyticus (strain JCSC1435) protein is Large ribosomal subunit protein uL1.